A 430-amino-acid polypeptide reads, in one-letter code: MKNVLAIILGGGAGSRLYPLTKQRAKPAVPLAGKYRLIDIPVSNCINADINKIYVLTQFNSASLNRHLSQTYNLSSGFGNGFVEVLAAQITPENPNWFQGTADAVRQYLWLIKEWDVDEYLILSGDHLYRMDYSQFIQRHRDTNADITLSVLPIDEKRASDFGLMKLDGSGRVVEFSEKPKGDELRAMQVDTTILGLDPVAAAAQPFIASMGIYVFKRDVLIDLLSHHPEQTDFGKEVIPAAATRYNTQAFLFNDYWEDIGTIASFYEANLALTQQPSPPFSFYDEQAPIYTRARYLPPTKLLDCQVTQSIIGEGCILKQCTVQNSVLGIRSRIEADCVIQDALLMGADFYETSELRHQNRANGKVPMGIGSGSTIRRAIVDKNAHIGQNVQIVNKDHVEEADREDLGFMIRSGIVVVVKGAVIPDNTVI.

Alpha-D-glucose 1-phosphate contacts are provided by residues Gly163, 178 to 179 (EK), and Ser210.

Belongs to the bacterial/plant glucose-1-phosphate adenylyltransferase family. In terms of assembly, homotetramer.

It carries out the reaction alpha-D-glucose 1-phosphate + ATP + H(+) = ADP-alpha-D-glucose + diphosphate. The protein operates within glycan biosynthesis; glycogen biosynthesis. Functionally, involved in the biosynthesis of ADP-glucose, a building block required for the elongation reactions to produce glycogen. Catalyzes the reaction between ATP and alpha-D-glucose 1-phosphate (G1P) to produce pyrophosphate and ADP-Glc. The sequence is that of Glucose-1-phosphate adenylyltransferase from Synechococcus elongatus (strain ATCC 33912 / PCC 7942 / FACHB-805) (Anacystis nidulans R2).